We begin with the raw amino-acid sequence, 231 residues long: Uracil phosphoribosyltransferase (231 aa).

38–42 (KGLVR) lines the GTP pocket. 5-phospho-alpha-D-ribose 1-diphosphate contacts are provided by residues Arg-87, Arg-112, and 140 to 148 (DPMIATGST). Uracil is bound by residues Ile-203 and 208-210 (GDA). Asp-209 contacts 5-phospho-alpha-D-ribose 1-diphosphate.

Belongs to the UPRTase family. The cofactor is Mg(2+).

The enzyme catalyses UMP + diphosphate = 5-phospho-alpha-D-ribose 1-diphosphate + uracil. It participates in pyrimidine metabolism; UMP biosynthesis via salvage pathway; UMP from uracil: step 1/1. With respect to regulation, allosterically activated by GTP. In terms of biological role, catalyzes the conversion of uracil and 5-phospho-alpha-D-ribose 1-diphosphate (PRPP) to UMP and diphosphate. The protein is Uracil phosphoribosyltransferase of Methanococcus maripaludis (strain C7 / ATCC BAA-1331).